Here is a 352-residue protein sequence, read N- to C-terminus: V-type ATP synthase subunit C (352 aa).

The protein belongs to the V-ATPase V0D/AC39 subunit family.

Its function is as follows. Produces ATP from ADP in the presence of a proton gradient across the membrane. The chain is V-type ATP synthase subunit C (atpC) from Deinococcus radiodurans (strain ATCC 13939 / DSM 20539 / JCM 16871 / CCUG 27074 / LMG 4051 / NBRC 15346 / NCIMB 9279 / VKM B-1422 / R1).